The primary structure comprises 268 residues: Putative hydro-lyase ABSDF2257 (268 aa).

The protein belongs to the D-glutamate cyclase family.

This is Putative hydro-lyase ABSDF2257 from Acinetobacter baumannii (strain SDF).